Here is a 370-residue protein sequence, read N- to C-terminus: MLSNKDPLSLMAMWGSVKGYDPNQGASFEGPEKRLEVIMRIIDETHSEGLHALGDEVWKGVVGSLNAQIVSKESNEYIRSYVLTESSLFVMRDRIILITCGTTTLLNAVPFVLDAVSDVRGEVEWVSFMHKNYSFPWEQKGPHLSMAEEFNTLRTYFPSGKPFIFGPVDSDHYFLFVYDDVIRPCETENDTQLSMTMYGLDRTQTKHWFSDRFISTGTETAAIRKATKLDKVADDSWKLHDLQFEPCGYSINTIRGAEYQTIHITPEDHCSFASYETNTPAVNYSERINTVLGVFAPIRFSVIVFIDPDSDVGRLYQKGQNVGVEAEYYPKYELQNRTVNEFAPGYVVMKMNYARRAEVTEKDSTDSVEE.

Phenylalanine 28 is a substrate binding site. Residues glutamate 29 and glutamate 32 contribute to the active site. Position 85 (glutamate 85) interacts with substrate. Residue serine 86 is the Schiff-base intermediate with substrate; via pyruvic acid of the active site. Residue serine 86 is modified to Pyruvic acid (Ser); by autocatalysis. Cysteine 100 acts as the Proton donor; for catalytic activity in catalysis. Catalysis depends on proton acceptor; for processing activity residues serine 250 and histidine 263. Glutamate 267 serves as a coordination point for substrate.

The protein belongs to the eukaryotic AdoMetDC family. In terms of assembly, forms a heterodimer with catalytically inactive AdoMetDC prozyme; heterodimerization is required to activate AdoMetDC. It depends on pyruvate as a cofactor. Post-translationally, is synthesized initially as an inactive proenzyme. Formation of the active enzyme involves a self-maturation process in which the active site pyruvoyl group is generated from an internal serine residue via an autocatalytic post-translational modification. Two non-identical subunits are generated from the proenzyme in this reaction, and the pyruvate is formed at the N-terminus of the alpha chain, which is derived from the carboxyl end of the proenzyme. The post-translation cleavage follows an unusual pathway, termed non-hydrolytic serinolysis, in which the side chain hydroxyl group of the serine supplies its oxygen atom to form the C-terminus of the beta chain, while the remainder of the serine residue undergoes an oxidative deamination to the alpha chain.

It catalyses the reaction S-adenosyl-L-methionine + H(+) = S-adenosyl 3-(methylsulfanyl)propylamine + CO2. It participates in amine and polyamine biosynthesis; S-adenosylmethioninamine biosynthesis; S-adenosylmethioninamine from S-adenosyl-L-methionine: step 1/1. Its activity is regulated as follows. Allosterically activated by AdoMetDC prozyme. Activated by putrescine. Inhibited by spermine and methylglyoxal-bis(guanylhydrazone) (MGBG) and slightly by spermidine. Inhibited by 5'-([(Z)-4-amino-2-butenyl]methylamino)-5'-deoxyadenosine (MDL 73811). Its function is as follows. Probably in association with catalytically inactive AdoMetDC prozyme, catalyzes the decarboxylation of S-adenosyl-L-methionine which is essential for the biosynthesis of the polyamine spermidine. Required for growth and survival during the bloodstream life cycle stage. This is S-adenosylmethionine decarboxylase proenzyme from Trypanosoma cruzi.